A 210-amino-acid polypeptide reads, in one-letter code: Probable GTP-binding protein EngB (210 aa).

Positions 25–199 constitute an EngB-type G domain; the sequence is TGIEVAFAGR…RQKLDTWFNE (175 aa). GTP contacts are provided by residues 33-40, 60-64, 78-81, 145-148, and 178-180; these read GRSNAGKS, GRTQL, DLPG, TKAD, and FSS. Positions 40 and 62 each coordinate Mg(2+).

The protein belongs to the TRAFAC class TrmE-Era-EngA-EngB-Septin-like GTPase superfamily. EngB GTPase family. Requires Mg(2+) as cofactor.

Functionally, necessary for normal cell division and for the maintenance of normal septation. This chain is Probable GTP-binding protein EngB, found in Escherichia coli O157:H7.